A 506-amino-acid chain; its full sequence is Lysine--tRNA ligase (506 aa).

Residues glutamate 416 and glutamate 423 each contribute to the Mg(2+) site.

The protein belongs to the class-II aminoacyl-tRNA synthetase family. As to quaternary structure, homodimer. Mg(2+) is required as a cofactor.

Its subcellular location is the cytoplasm. The enzyme catalyses tRNA(Lys) + L-lysine + ATP = L-lysyl-tRNA(Lys) + AMP + diphosphate. This is Lysine--tRNA ligase from Bordetella parapertussis (strain 12822 / ATCC BAA-587 / NCTC 13253).